Reading from the N-terminus, the 648-residue chain is FAD-binding monooxygenase trt3 (648 aa).

FAD contacts are provided by residues 118–121 (TWYW), 130–131 (DI), and tyrosine 136. Position 128–130 (128–130 (MCD)) interacts with NADP(+). NADP(+) contacts are provided by residues 274–280 (TGSTAVQ) and 297–298 (RT).

It belongs to the FAD-binding monooxygenase family. It depends on FAD as a cofactor.

It participates in secondary metabolite biosynthesis; terpenoid biosynthesis. FAD-binding monooxygenase; part of the gene cluster that mediates the biosynthesis of terretonin, a fungal meroterpenoid that acts as a mycotoxin. The first step of the pathway is the synthesis of 3,5-dimethylorsellinic acid (DMOA) by the polyketide synthase trt4. DMOA is then prenylated into farnesyl-DMOA by the polyprenyl transferase trt2. Methylation by the methyltransferase trt5 then leads to farnesyl-DMOA methyl ester which is further subject to epoxidation by the FAD-dependent monooxygenase trt8 to yield epoxyfarnesyl-DMOA methyl ester. Cyclization of epoxyfarnesyl-DMOA methyl ester by the terpene cyclase trt1 leads to a tetracycle intermediate which is in turn converted to preterretonin. Dehydrogenase trt9 comes next to transform preterretonin to preterrenoid. The FAD-dependent monooxygenase trt3 is then required for the C-hydroxylation at C16 of preterrenoid to yield terrenoid. The cytochrome P450 trt6 catalyzes three successive oxidations to transform terrenoid into an unstable intermediate, which then undergoes the D-ring expansion and unusual rearrangement of the methoxy group to afford the core skeleton of terretonin. Trt14 catalyzes the D-ring expansion of terretonin involving intramolecular methoxy rearrangement as well as the hydrolysis of the expanded D-ring and the methyl ester moiety. Finally, the nonheme iron-dependent dioxygenase trt7 accomplishes the last two oxidation reactions steps to complete the biosynthesis of terretonin. Terretonin C is produced via spontaneous decarboxylation of the terretonin precursor. Another shunt product of the terretonin biosynthesis is dihydrofarnesyl-DMOA, derived from epoxyfarnesyl-DMOA through hydrolysis of the epoxide. The protein is FAD-binding monooxygenase trt3 of Aspergillus terreus (strain NIH 2624 / FGSC A1156).